Reading from the N-terminus, the 90-residue chain is Neuropeptide F (90 aa).

Positions 1–27 (MTFSTSSSFSRRALVALLVCTLLIDLS) are cleaved as a signal peptide. The interval 54 to 90 (KHAQHARPRFGKRSYLNPAGYGQDEQEDDWQDSTFTR) is disordered. A compositionally biased stretch (basic residues) spans 56–65 (AQHARPRFGK). Phe-63 is subject to Phenylalanine amide. The propeptide occupies 67-90 (SYLNPAGYGQDEQEDDWQDSTFTR).

This sequence belongs to the NPY family. As to expression, expressed in hemolymph, brain and midgut.

It localises to the secreted. Functionally, an integral part of the sensory system that mediates food signaling, providing the neural basis for the regulation of food response; coordinates larval foraging and social behavior changes during development. May have a hormonal role in females. The protein is Neuropeptide F (npf) of Aedes aegypti (Yellowfever mosquito).